Consider the following 209-residue polypeptide: Ribosomal RNA large subunit methyltransferase E (209 aa).

5 residues coordinate S-adenosyl-L-methionine: Gly-63, Trp-65, Asp-83, Asp-99, and Asp-124. Residue Lys-164 is the Proton acceptor of the active site.

Belongs to the class I-like SAM-binding methyltransferase superfamily. RNA methyltransferase RlmE family.

It localises to the cytoplasm. It carries out the reaction uridine(2552) in 23S rRNA + S-adenosyl-L-methionine = 2'-O-methyluridine(2552) in 23S rRNA + S-adenosyl-L-homocysteine + H(+). Specifically methylates the uridine in position 2552 of 23S rRNA at the 2'-O position of the ribose in the fully assembled 50S ribosomal subunit. The polypeptide is Ribosomal RNA large subunit methyltransferase E (Shewanella denitrificans (strain OS217 / ATCC BAA-1090 / DSM 15013)).